A 157-amino-acid polypeptide reads, in one-letter code: Protein Smg homolog (157 aa).

Belongs to the Smg family.

This Aliivibrio salmonicida (strain LFI1238) (Vibrio salmonicida (strain LFI1238)) protein is Protein Smg homolog.